The chain runs to 87 residues: Small ribosomal subunit protein uS19m (87 aa).

It belongs to the universal ribosomal protein uS19 family.

Its subcellular location is the mitochondrion. This is Small ribosomal subunit protein uS19m (mrps19) from Dictyostelium citrinum (Slime mold).